The chain runs to 194 residues: Protein GrpE (194 aa).

Residues 1–12 (MSSKEQNTPNEQ) show a composition bias toward polar residues. The disordered stretch occupies residues 1-39 (MSSKEQNTPNEQASDEIETEQAKNQGADTAAEAADQRDE).

The protein belongs to the GrpE family. Homodimer.

It is found in the cytoplasm. In terms of biological role, participates actively in the response to hyperosmotic and heat shock by preventing the aggregation of stress-denatured proteins, in association with DnaK and GrpE. It is the nucleotide exchange factor for DnaK and may function as a thermosensor. Unfolded proteins bind initially to DnaJ; upon interaction with the DnaJ-bound protein, DnaK hydrolyzes its bound ATP, resulting in the formation of a stable complex. GrpE releases ADP from DnaK; ATP binding to DnaK triggers the release of the substrate protein, thus completing the reaction cycle. Several rounds of ATP-dependent interactions between DnaJ, DnaK and GrpE are required for fully efficient folding. In Erwinia tasmaniensis (strain DSM 17950 / CFBP 7177 / CIP 109463 / NCPPB 4357 / Et1/99), this protein is Protein GrpE.